A 429-amino-acid chain; its full sequence is FAD-dependent monooxygenase azaH (429 aa).

Residues 5 to 25 (SIEVAIIGAGITGITLALGLL) traverse the membrane as a helical segment. FAD contacts are provided by E35 and G48. Residues N75 and N87 are each glycosylated (N-linked (GlcNAc...) asparagine). Position 116 (R116) interacts with FAD. R199 is a catalytic residue. FAD is bound by residues D315 and A328.

The protein belongs to the paxM FAD-dependent monooxygenase family. Requires FAD as cofactor.

It localises to the membrane. The protein operates within secondary metabolite biosynthesis. Functionally, FAD-dependent monooxygenase; part of the gene cluster that mediates the biosynthesis of azaphilones, a class of fungal metabolites characterized by a highly oxygenated pyrano-quinone bicyclic core and exhibiting a broad range of bioactivities. In the first step, the non-reducing polyketide synthase azaA forms the hexaketide precursor from successive condensations of five malonyl-CoA units, presumably with a simple acetyl-CoA starter unit. The reactive polyketide chain then undergoes a PT-mediated C2-C7 cyclization to afford the aromatic ring and is eventually released as an aldehyde through the R-domain. The putative ketoreductase azaE is proposed to catalyze the reduction of the terminal ketone resulting in the early culture product FK17-P2a. The monooxygenase azaH was demonstrated to be the only enzyme required to convert FK17-P2a to azanigerone E. AzaH first hydroxylates the benzaldehyde intermediate FK17-P2a at C4, which triggers the formation of the pyran-ring to afford azanigerone E. In parallel, the 2,4-dimethylhexanoyl chain is synthesized by the HR-PKS azaB and is proposed to be transferred to the C4-hydroxyl of azanigerone E by the acyltransferase azaD directly from the ACP domain of azaB. Alternatively, the 2,4-dimethyl-hexanoyl chain may be offloaded from the HR-PKS as a carboxylic acid and converted to an acyl-CoA by azaF. The resulting acyl-CoA molecule could then be taken up as a substrate by AzaD to form azanigerone B. To yield the carboxylic acid substituent in azanigerone A, the hydroxypropyl side chain of azanigerone B would need to undergo a C-C oxidative cleavage catalyzed by cytochrome P450 AzaI. AzaI is proposed to act on a vicinal diol that leads to a C-C bond scission either through an alkoxyradical intermediate or a peroxy complex. In the biosynthesis of azanigerone A, azanigerone B first undergoes hydroxylation at C10, possibly catalyzed by one of the two FAD-dependent monooxygenases encoded in the cluster, azaG or azaL, resulting in the vicinal diol azanigerone C. Oxidative cleavage of azanigerone C by azaI would yield the corresponding aldehyde derivative of azanigerone A. Finally, the dehydrogenase azaJ is proposed to convert the aldehyde functional group into the carboxylic acid, completing the conversion from azanigerone B to azanigerone A. Alternatively, the oxidation of aldehyde to carboxylic acid may be catalyzed by the same P450 enzyme azaI via consecutive oxidation or by endogenous alcohol dehydrogenase. This chain is FAD-dependent monooxygenase azaH, found in Aspergillus niger (strain ATCC 1015 / CBS 113.46 / FGSC A1144 / LSHB Ac4 / NCTC 3858a / NRRL 328 / USDA 3528.7).